The chain runs to 77 residues: uncharacterized protein (77 aa).

Residues 53-77 form a disordered region; the sequence is KRVSSEANKEKSDITELLRKQVRPD.

This is an uncharacterized protein from Escherichia coli (strain K12).